The primary structure comprises 210 residues: Ribosomal RNA small subunit methyltransferase G (210 aa).

S-adenosyl-L-methionine is bound by residues glycine 80, leucine 85, 131 to 132, and arginine 146; that span reads VE.

The protein belongs to the methyltransferase superfamily. RNA methyltransferase RsmG family.

The protein resides in the cytoplasm. It carries out the reaction guanosine(527) in 16S rRNA + S-adenosyl-L-methionine = N(7)-methylguanosine(527) in 16S rRNA + S-adenosyl-L-homocysteine. Its function is as follows. Specifically methylates the N7 position of guanine in position 527 of 16S rRNA. The polypeptide is Ribosomal RNA small subunit methyltransferase G (Pasteurella multocida (strain Pm70)).